Here is a 154-residue protein sequence, read N- to C-terminus: Endoribonuclease YbeY (154 aa).

Zn(2+)-binding residues include His-115, His-119, and His-125.

This sequence belongs to the endoribonuclease YbeY family. Zn(2+) serves as cofactor.

Its subcellular location is the cytoplasm. Functionally, single strand-specific metallo-endoribonuclease involved in late-stage 70S ribosome quality control and in maturation of the 3' terminus of the 16S rRNA. The protein is Endoribonuclease YbeY of Halorhodospira halophila (strain DSM 244 / SL1) (Ectothiorhodospira halophila (strain DSM 244 / SL1)).